Here is a 153-residue protein sequence, read N- to C-terminus: Ribonuclease H (153 aa).

The RNase H type-1 domain maps to Met1–Ser141. Asp9, Glu47, Asp69, and Asp133 together coordinate Mg(2+).

Belongs to the RNase H family. Monomer. Requires Mg(2+) as cofactor.

It is found in the cytoplasm. The enzyme catalyses Endonucleolytic cleavage to 5'-phosphomonoester.. Endonuclease that specifically degrades the RNA of RNA-DNA hybrids. This Pseudoalteromonas atlantica (strain T6c / ATCC BAA-1087) protein is Ribonuclease H.